The following is a 633-amino-acid chain: Biosynthetic arginine decarboxylase (633 aa).

Residue K101 is modified to N6-(pyridoxal phosphate)lysine. A substrate-binding site is contributed by 284–294; the sequence is VDVGGGLGVDY.

It belongs to the Orn/Lys/Arg decarboxylase class-II family. SpeA subfamily. The cofactor is Mg(2+). Pyridoxal 5'-phosphate serves as cofactor.

It catalyses the reaction L-arginine + H(+) = agmatine + CO2. It participates in amine and polyamine biosynthesis; agmatine biosynthesis; agmatine from L-arginine: step 1/1. Catalyzes the biosynthesis of agmatine from arginine. This chain is Biosynthetic arginine decarboxylase, found in Aeromonas salmonicida (strain A449).